A 346-amino-acid polypeptide reads, in one-letter code: Very-long-chain 3-oxoacyl-CoA reductase (346 aa).

The helical transmembrane segment at 26–46 (TASVLLVAGGWFVVSRVWTFL) threads the bilayer. Residues Ile71, Asp126, Asp134, Asn153, Tyr220, Lys224, Ile253, and Ser255 each contribute to the NADP(+) site. Catalysis depends on Tyr220, which acts as the Proton donor. Lys224 serves as the catalytic Lowers pKa of active site Tyr.

This sequence belongs to the short-chain dehydrogenases/reductases (SDR) family.

It localises to the endoplasmic reticulum membrane. The enzyme catalyses a very-long-chain (3R)-3-hydroxyacyl-CoA + NADP(+) = a very-long-chain 3-oxoacyl-CoA + NADPH + H(+). The protein operates within lipid metabolism; fatty acid biosynthesis. Its function is as follows. Component of the microsomal membrane bound fatty acid elongation system, which produces the 26-carbon very long-chain fatty acids (VLCFA) from palmitate. Catalyzes the reduction of the 3-ketoacyl-CoA intermediate that is formed in each cycle of fatty acid elongation. VLCFAs serve as precursors for ceramide and sphingolipids. This chain is Very-long-chain 3-oxoacyl-CoA reductase, found in Emericella nidulans (strain FGSC A4 / ATCC 38163 / CBS 112.46 / NRRL 194 / M139) (Aspergillus nidulans).